The sequence spans 560 residues: Ubiquitin carboxyl-terminal hydrolase MINDY-3 homolog (560 aa).

The segment covering Met-1–Glu-13 has biased composition (basic and acidic residues). 2 disordered regions span residues Met-1 to Ala-30 and Ser-44 to Ala-91. Low complexity-rich tracts occupy residues Ser-15–Ala-30 and Thr-52–Ser-81. Cys-139 functions as the Nucleophile in the catalytic mechanism. The tract at residues Thr-203–Glu-237 is disordered. Phosphoserine is present on residues Ser-212 and Ser-219. His-403 (proton acceptor) is an active-site residue.

Belongs to the MINDY deubiquitinase family. FAM188 subfamily.

The catalysed reaction is Thiol-dependent hydrolysis of ester, thioester, amide, peptide and isopeptide bonds formed by the C-terminal Gly of ubiquitin (a 76-residue protein attached to proteins as an intracellular targeting signal).. In terms of biological role, hydrolase that can remove 'Lys-48'-linked conjugated ubiquitin from proteins. This chain is Ubiquitin carboxyl-terminal hydrolase MINDY-3 homolog (mindy3), found in Drosophila melanogaster (Fruit fly).